A 521-amino-acid polypeptide reads, in one-letter code: Beta-glucosidase 6 (521 aa).

The first 38 residues, 1 to 38, serve as a signal peptide directing secretion; it reads MGRIKSSSGRCSTARLEAVAVLVVVFGVASSSLRGCIA. A beta-D-glucoside-binding positions include glutamine 64, histidine 165, and 210-211; that span reads NE. The Proton donor role is filled by glutamate 211. Cysteine 230 and cysteine 238 form a disulfide bridge. N-linked (GlcNAc...) asparagine glycosylation occurs at asparagine 291. Tyrosine 354 lines the a beta-D-glucoside pocket. 2 N-linked (GlcNAc...) asparagine glycosylation sites follow: asparagine 362 and asparagine 372. A beta-D-glucoside is bound by residues glutamate 427, tryptophan 477, 484–485, and phenylalanine 493; that span reads EW. The active-site Nucleophile is the glutamate 427.

The protein belongs to the glycosyl hydrolase 1 family. In terms of assembly, homodimer.

The protein resides in the secreted. It catalyses the reaction Hydrolysis of terminal, non-reducing beta-D-glucosyl residues with release of beta-D-glucose.. Its function is as follows. Hydrolyzes glycosides, oligosaccharides and hydrophobic glycosides. Possesses gibberellin ester beta-D-glucosidase activity. Can hydrolyze gibberellin A4 beta-D-glucosyl ester in vitro. In Oryza sativa subsp. japonica (Rice), this protein is Beta-glucosidase 6.